Consider the following 704-residue polypeptide: RCC1 domain-containing protein DDB_G0295713 (704 aa).

RCC1 repeat units lie at residues 1–48 (MYCW…VKGE) and 69–120 (KNRC…ITDQ). Residues 221–246 (YNNNNNNNNNNNNNNNNNNNNNNNNN) form a disordered region. Positions 222–246 (NNNNNNNNNNNNNNNNNNNNNNNNN) are enriched in low complexity. The stretch at 298-348 (QNQVYGWGENLNGQLGIEGIDYSTEPILIELPLVEIKHISSGAYHSAFVTN) is one RCC1 3 repeat. Positions 412 to 431 (IKDKNENNETKHTNKNKDNH) are enriched in basic and acidic residues. Residues 412–458 (IKDKNENNETKHTNKNKDNHDDDDESDHSDDDHHDDDDNDKDSQGIN) are disordered. Residues 432–451 (DDDDESDHSDDDHHDDDDND) are compositionally biased toward acidic residues. Residues 668 to 698 (IEQTSTQVANSENENENEIEMKMKMKKNEMK) adopt a coiled-coil conformation.

This Dictyostelium discoideum (Social amoeba) protein is RCC1 domain-containing protein DDB_G0295713.